The chain runs to 219 residues: ATP synthase delta chain, chloroplastic (219 aa).

A chloroplast-targeting transit peptide spans 1-33 (MLAAKSIAGPRAFKASAVRAAPKAGRRTVVVMA).

This sequence belongs to the ATPase delta chain family. In terms of assembly, F-type ATPases have 2 components, F(1) - the catalytic core - and F(0) - the membrane proton channel. F(1) has five subunits: alpha(3), beta(3), gamma(1), delta(1), epsilon(1). F(0) has four main subunits: a(1), b(1), b'(1) and c(10-14). The alpha and beta chains form an alternating ring which encloses part of the gamma chain. F(1) is attached to F(0) by a central stalk formed by the gamma and epsilon chains, while a peripheral stalk is formed by the delta, b and b' chains.

It localises to the plastid. The protein localises to the chloroplast thylakoid membrane. In terms of biological role, f(1)F(0) ATP synthase produces ATP from ADP in the presence of a proton or sodium gradient. F-type ATPases consist of two structural domains, F(1) containing the extramembraneous catalytic core and F(0) containing the membrane proton channel, linked together by a central stalk and a peripheral stalk. During catalysis, ATP synthesis in the catalytic domain of F(1) is coupled via a rotary mechanism of the central stalk subunits to proton translocation. This protein seems to be part of the stalk that links CF(0) to CF(1). It either transmits conformational changes from CF(0) into CF(1) or is implicated in proton conduction. This chain is ATP synthase delta chain, chloroplastic, found in Chlamydomonas reinhardtii (Chlamydomonas smithii).